The sequence spans 695 residues: Tripartite terminase subunit 1 (695 aa).

The C3H1-type zinc-finger motif lies at 182 to 210; sequence CLECLQEVCLTPNQGTSLQAMLPDTACSH. Residue 621–628 participates in ATP binding; it reads YNRTWERE.

The protein belongs to the herpesviridae TRM1 protein family. In terms of assembly, associates with TRM2 and TRM3 to form the tripartite terminase complex. Interacts with portal protein.

The protein localises to the host nucleus. Its function is as follows. Component of the molecular motor that translocates viral genomic DNA in empty capsid during DNA packaging. Forms a tripartite terminase complex together with TRM2 and TRM3 in the host cytoplasm. Once the complex reaches the host nucleus, it interacts with the capsid portal vertex. This portal forms a ring in which genomic DNA is translocated into the capsid. TRM1 carries an endonuclease activity that plays an important role for the cleavage of concatemeric viral DNA into unit length genomes. The polypeptide is Tripartite terminase subunit 1 (Homo sapiens (Human)).